Reading from the N-terminus, the 198-residue chain is MIRSVNRTGALMMALILSGCVMKQQQPAPVEPTQPVEPVQPVPQPEQPIPQPQPVPQPPKLVTINWDASVEPLVAQMVRAATVTPGSVLLVDRIKNSTNGALQGEKATSAIQNALNNNGKFTLVSSEQLAQAKQTLGLSPDDSLNSRSKAIGLARNLNAQYVLYSTAKGDVKSPTLQMQLMLVQTGEIIWSGNGVAQN.

The first 19 residues, 1–19 (MIRSVNRTGALMMALILSG), serve as a signal peptide directing secretion. C20 is lipidated: N-palmitoyl cysteine. The S-diacylglycerol cysteine moiety is linked to residue C20. The segment covering 26–37 (QPAPVEPTQPVE) has biased composition (low complexity). Positions 26–59 (QPAPVEPTQPVEPVQPVPQPEQPIPQPQPVPQPP) are disordered. Positions 38-59 (PVQPVPQPEQPIPQPQPVPQPP) are enriched in pro residues.

This sequence belongs to the LpoB family. Interacts with PBP1b.

Its subcellular location is the cell outer membrane. Its function is as follows. Regulator of peptidoglycan synthesis that is essential for the function of penicillin-binding protein 1B (PBP1b). This Pantoea ananatis (strain LMG 20103) protein is Penicillin-binding protein activator LpoB.